Consider the following 183-residue polypeptide: Phosphinothricin N-acetyltransferase (183 aa).

One can recognise an N-acetyltransferase domain in the interval 8 to 169 (VEIRPATAAD…DVGFWQRDFE (162 aa)). Residues 91–93 (VYV), 99–104 (RLGLGS), and N130 each bind acetyl-CoA.

This sequence belongs to the acetyltransferase family. PAT/BAR subfamily.

The catalysed reaction is phosphinothricin + acetyl-CoA = N-acetylphosphinothricin + CoA + H(+). Inactivates phosphinothricin (PPT) by transfer of an acetyl group from acetyl CoA. This enzyme is an effector of phosphinothricin tripeptide (PTT or bialaphos) resistance. This chain is Phosphinothricin N-acetyltransferase, found in Streptomyces viridochromogenes (strain DSM 40736 / JCM 4977 / BCRC 1201 / Tue 494).